Here is a 297-residue protein sequence, read N- to C-terminus: MVHQVLYRALVSTKWLAESIRSGRLGPSLRVLDASWYSPGTRQARKEYQERHVPGASFFDIEECRDTTSPYEMMLPSEAHFGDYVGNLGISNDTHVVVYDGDDLGSFYAPRVWWMFRVFGHRTVSVLNGGFRNWLKEGHPVTSEPSRPEPAVFKATLNLSLLKTYEQVLENLQSKRFQLVDSRAQGRYLGTQPEPDIVGLDSGHIRGSVNMPFMDFLTKDGFEKSPEELRAIFQDKKVDLSQPLIATCRKGVTACHVALAAYLCGKPDVAVYDGSWSEWFRRAPPETRVSQGKSGKA.

Lys-14 is modified (N6-acetyllysine; alternate). Lys-14 carries the N6-succinyllysine; alternate modification. The Rhodanese 1 domain occupies 25–143; sequence LGPSLRVLDA…WLKEGHPVTS (119 aa). Ser-35 carries an O-linked (GlcNAc) serine glycan. At Ser-38 the chain carries Phosphoserine. Lys-136 is modified (N6-acetyllysine; alternate). Position 136 is an N6-succinyllysine; alternate (Lys-136). Residues 144–159 form a hinge region; it reads EPSRPEPAVFKATLNL. An N6-acetyllysine modification is found at Lys-163. The region spanning 173–288 is the Rhodanese 2 domain; sequence QSKRFQLVDS…WFRRAPPETR (116 aa). The residue at position 175 (Lys-175) is an N6-acetyllysine; alternate. Lys-175 is subject to N6-succinyllysine; alternate. Position 187 (Arg-187) interacts with substrate. An N6-acetyllysine; alternate mark is found at Lys-219 and Lys-224. Lys-219 and Lys-224 each carry N6-succinyllysine; alternate. At Lys-236 the chain carries N6-acetyllysine. Lys-237 carries the post-translational modification N6-acetyllysine; alternate. Lys-237 bears the N6-succinyllysine; alternate mark. Cys-248 functions as the Cysteine persulfide intermediate in the catalytic mechanism. Position 250 (Lys-250) interacts with substrate.

Monomer. Expressed in numerous tissues.

It is found in the mitochondrion matrix. It carries out the reaction thiosulfate + hydrogen cyanide = thiocyanate + sulfite + 2 H(+). Together with MRPL18, acts as a mitochondrial import factor for the cytosolic 5S rRNA. Only the nascent unfolded cytoplasmic form is able to bind to the 5S rRNA. Formation of iron-sulfur complexes and cyanide detoxification. This is Thiosulfate sulfurtransferase (Tst) from Mus musculus (Mouse).